The following is a 332-amino-acid chain: Biotin synthase (332 aa).

In terms of domain architecture, Radical SAM core spans 53–282; the sequence is HFGKKVKLNM…TKEIRISGGR (230 aa). Residues Cys71, Cys75, and Cys78 each contribute to the [4Fe-4S] cluster site. [2Fe-2S] cluster is bound by residues Cys115, Cys147, Cys207, and Arg277.

It belongs to the radical SAM superfamily. Biotin synthase family. As to quaternary structure, homodimer. [4Fe-4S] cluster serves as cofactor. It depends on [2Fe-2S] cluster as a cofactor.

The catalysed reaction is (4R,5S)-dethiobiotin + (sulfur carrier)-SH + 2 reduced [2Fe-2S]-[ferredoxin] + 2 S-adenosyl-L-methionine = (sulfur carrier)-H + biotin + 2 5'-deoxyadenosine + 2 L-methionine + 2 oxidized [2Fe-2S]-[ferredoxin]. It participates in cofactor biosynthesis; biotin biosynthesis; biotin from 7,8-diaminononanoate: step 2/2. In terms of biological role, catalyzes the conversion of dethiobiotin (DTB) to biotin by the insertion of a sulfur atom into dethiobiotin via a radical-based mechanism. In Bacillus cereus (strain B4264), this protein is Biotin synthase.